We begin with the raw amino-acid sequence, 103 residues long: Phosphoribosyl-ATP pyrophosphatase (103 aa).

This sequence belongs to the PRA-PH family.

The protein resides in the cytoplasm. It catalyses the reaction 1-(5-phospho-beta-D-ribosyl)-ATP + H2O = 1-(5-phospho-beta-D-ribosyl)-5'-AMP + diphosphate + H(+). It functions in the pathway amino-acid biosynthesis; L-histidine biosynthesis; L-histidine from 5-phospho-alpha-D-ribose 1-diphosphate: step 2/9. The chain is Phosphoribosyl-ATP pyrophosphatase from Cereibacter sphaeroides (strain ATCC 17029 / ATH 2.4.9) (Rhodobacter sphaeroides).